A 290-amino-acid polypeptide reads, in one-letter code: CMRF35-like molecule 1 (290 aa).

The first 19 residues, 1–19, serve as a signal peptide directing secretion; it reads MPLLTLYLLLFWLSGYSIV. The Ig-like V-type domain maps to 20–126; sequence TQITGPTTVN…LGVTVQVTID (107 aa). Residues 20–156 lie on the Extracellular side of the membrane; it reads TQITGPTTVN…DNRHKLLKLS (137 aa). 2 disulfide bridges follow: Cys40–Cys108 and Cys54–Cys62. Residue Asn88 is glycosylated (N-linked (GlcNAc...) asparagine). Residues 157-177 traverse the membrane as a helical segment; sequence VLLPLIFTILLLLLVAASLLA. Residues 178–290 lie on the Cytoplasmic side of the membrane; it reads WRMMKYQQKA…PTEYSTISRP (113 aa). Positions 267 to 290 are disordered; it reads GHLSSHLPGRGPEEPTEYSTISRP.

It belongs to the CD300 family. As to quaternary structure, interacts with PTPN6/SHP-1 in a tyrosine phosphorylation dependent manner. Interacts with IL4R. In terms of processing, phosphorylated on tyrosine. In terms of tissue distribution, highly expressed in spleen, peripheral blood leukocyte and monocyte, and lung. Weakly expressed in thymus, heart, brain, placenta, liver, skeletal muscle, kidney, pancreas, prostate, testis, ovary, small intestine or colon. Expressed selectively in monocytes and monocyte-related cells.

The protein localises to the cell membrane. In terms of biological role, acts as an inhibitory receptor for myeloid cells and mast cells. Positively regulates the phagocytosis of apoptotic cells (efferocytosis) via phosphatidylserine (PS) recognition; recognizes and binds PS as a ligand which is expressed on the surface of apoptotic cells. Plays an important role in the maintenance of immune homeostasis, by promoting macrophage-mediated efferocytosis and by inhibiting dendritic cell-mediated efferocytosis. Negatively regulates Fc epsilon receptor-dependent mast cell activation and allergic responses via binding to ceramide and sphingomyelin which act as ligands. May act as a coreceptor for interleukin 4 (IL-4). Associates with and regulates IL-4 receptor alpha-mediated responses by augmenting IL-4- and IL-13-induced signaling. Negatively regulates the Toll-like receptor (TLR) signaling mediated by MYD88 and TRIF through activation of PTPN6/SHP-1 and PTPN11/SHP-2. Inhibits osteoclast formation. Induces macrophage cell death upon engagement. This is CMRF35-like molecule 1 (CD300LF) from Homo sapiens (Human).